The chain runs to 365 residues: Peptide chain release factor 2 (365 aa).

Gln252 carries the N5-methylglutamine modification.

It belongs to the prokaryotic/mitochondrial release factor family. In terms of processing, methylated by PrmC. Methylation increases the termination efficiency of RF2.

It localises to the cytoplasm. Its function is as follows. Peptide chain release factor 2 directs the termination of translation in response to the peptide chain termination codons UGA and UAA. In Yersinia pseudotuberculosis serotype O:1b (strain IP 31758), this protein is Peptide chain release factor 2.